The chain runs to 670 residues: DNA ligase (670 aa).

Residues 32 to 36 (DAEYD), 81 to 82 (SL), and glutamate 113 each bind NAD(+). Lysine 115 (N6-AMP-lysine intermediate) is an active-site residue. Residues arginine 136, glutamate 173, lysine 290, and lysine 314 each coordinate NAD(+). Positions 408, 411, 426, and 432 each coordinate Zn(2+). A BRCT domain is found at 592–670 (EIDSPFAGKT…EAEMIRLLGE (79 aa)).

The protein belongs to the NAD-dependent DNA ligase family. LigA subfamily. It depends on Mg(2+) as a cofactor. Mn(2+) is required as a cofactor.

The enzyme catalyses NAD(+) + (deoxyribonucleotide)n-3'-hydroxyl + 5'-phospho-(deoxyribonucleotide)m = (deoxyribonucleotide)n+m + AMP + beta-nicotinamide D-nucleotide.. Functionally, DNA ligase that catalyzes the formation of phosphodiester linkages between 5'-phosphoryl and 3'-hydroxyl groups in double-stranded DNA using NAD as a coenzyme and as the energy source for the reaction. It is essential for DNA replication and repair of damaged DNA. This chain is DNA ligase, found in Yersinia pseudotuberculosis serotype IB (strain PB1/+).